The sequence spans 594 residues: A-type ATP synthase subunit A (594 aa).

Residue 236–243 (GPFGSGKT) coordinates ATP.

Belongs to the ATPase alpha/beta chains family. As to quaternary structure, has multiple subunits with at least A(3), B(3), C, D, E, F, H, I and proteolipid K(x).

Its subcellular location is the cell membrane. It carries out the reaction ATP + H2O + 4 H(+)(in) = ADP + phosphate + 5 H(+)(out). Functionally, component of the A-type ATP synthase that produces ATP from ADP in the presence of a proton gradient across the membrane. The A chain is the catalytic subunit. This Pyrobaculum neutrophilum (strain DSM 2338 / JCM 9278 / NBRC 100436 / V24Sta) (Thermoproteus neutrophilus) protein is A-type ATP synthase subunit A.